We begin with the raw amino-acid sequence, 175 residues long: MKEKIKLIKGNIVDQEVDAIVNAANSSLIGGGGVDGAIHKAGGPAIAEELKVIREKQGGCPTGHAVITGAGNLKAKYVIHAVGPIWKGGNHNEDNLLASAYIESLKLADEYNVKTIAFPSISTGAYGFPVERAARIALRVVSDYLEGSSIKEVRFVLFSDRDYEVYSKAYEELDK.

Residues 1–174 (MKEKIKLIKG…VYSKAYEELD (174 aa)) form the Macro domain.

This sequence belongs to the MacroD-type family.

The polypeptide is Macro domain-containing protein TTE0995 (Caldanaerobacter subterraneus subsp. tengcongensis (strain DSM 15242 / JCM 11007 / NBRC 100824 / MB4) (Thermoanaerobacter tengcongensis)).